Reading from the N-terminus, the 344-residue chain is Melanocyte-stimulating hormone receptor (344 aa).

The Extracellular portion of the chain corresponds to 1 to 37; that stretch reads MPMQGAQRKLLGSLNSTPTATSNLGLAANHTGAPCLE. An N-linked (GlcNAc...) asparagine glycan is attached at asparagine 29. Residues 38-63 traverse the membrane as a helical segment; that stretch reads VPIPDGLFLSLGLVSLVENVLVVAAI. Topologically, residues 64–72 are cytoplasmic; the sequence is AKNRNLHSS. A helical membrane pass occupies residues 73–93; it reads MYCFICCLAVSDLLVSGSNML. Over 94 to 118 the chain is Extracellular; the sequence is ETAIILLLEAGALVTRASVVQQLHN. A helical membrane pass occupies residues 119 to 140; the sequence is TIDVLTCSSMLCSLCFLGAIAV. The Cytoplasmic portion of the chain corresponds to 141-163; that stretch reads DRYISIFYALRYHSIMTLPRAQR. A helical membrane pass occupies residues 164-183; it reads AIAAIWVASVLSSTLFITYY. The Extracellular segment spans residues 184 to 191; that stretch reads DHAAVLLC. A helical membrane pass occupies residues 192 to 211; the sequence is LVVFFLAMLVLMAVLYVHML. The Cytoplasmic portion of the chain corresponds to 212-240; it reads ARACQHAQGIIRLHKRQPPAHKGFGLRGA. Residues 241–266 traverse the membrane as a helical segment; the sequence is ATLTILLGIFFLCWGPFFLHLTLVVF. The Extracellular portion of the chain corresponds to 267-279; sequence CPQHMTCSCIFKN. Residues 280 to 300 form a helical membrane-spanning segment; the sequence is FKVFLTLIICNTIIDPLIYAF. At 301 to 344 the chain is on the cytoplasmic side; it reads RSQELRRTLKEVLLCSRWPGCWAEGGGDSVWPGSCVTLRGPLPP. Cysteine 315 carries S-palmitoyl cysteine lipidation.

Belongs to the G-protein coupled receptor 1 family. As to quaternary structure, interacts with MGRN1, but does not undergo MGRN1-mediated ubiquitination; this interaction competes with GNAS-binding and thus inhibits agonist-induced cAMP production. Interacts with OPN3; the interaction results in a decrease in MC1R-mediated cAMP signaling and ultimately a decrease in melanin production in melanocytes.

The protein localises to the cell membrane. Its function is as follows. Receptor for MSH (alpha, beta and gamma) and ACTH. The activity of this receptor is mediated by G proteins which activate adenylate cyclase. Mediates melanogenesis, the production of eumelanin (black/brown) and phaeomelanin (red/yellow), via regulation of cAMP signaling in melanocytes. The protein is Melanocyte-stimulating hormone receptor (MC1R) of Callimico goeldii (Goeldi's marmoset).